The chain runs to 221 residues: Deoxyribose-phosphate aldolase (221 aa).

Residue Asp96 is the Proton donor/acceptor of the active site. Lys157 functions as the Schiff-base intermediate with acetaldehyde in the catalytic mechanism. The active-site Proton donor/acceptor is Lys185.

This sequence belongs to the DeoC/FbaB aldolase family. DeoC type 1 subfamily.

Its subcellular location is the cytoplasm. The catalysed reaction is 2-deoxy-D-ribose 5-phosphate = D-glyceraldehyde 3-phosphate + acetaldehyde. Its pathway is carbohydrate degradation; 2-deoxy-D-ribose 1-phosphate degradation; D-glyceraldehyde 3-phosphate and acetaldehyde from 2-deoxy-alpha-D-ribose 1-phosphate: step 2/2. Functionally, catalyzes a reversible aldol reaction between acetaldehyde and D-glyceraldehyde 3-phosphate to generate 2-deoxy-D-ribose 5-phosphate. In Crocosphaera subtropica (strain ATCC 51142 / BH68) (Cyanothece sp. (strain ATCC 51142)), this protein is Deoxyribose-phosphate aldolase.